Reading from the N-terminus, the 206-residue chain is Sortase A (206 aa).

At 1 to 6 (MKKWTN) the chain is on the cytoplasmic side. The helical transmembrane segment at 7-24 (RLMTIAGVVLILVAAYLF) threads the bilayer. Topologically, residues 25-206 (AKPHIDNYLH…RKIFVATEVK (182 aa)) are extracellular. The tract at residues 49–69 (VKEQASKDKKQQAKPQIPKDK) is disordered. Ca(2+)-binding residues include Glu-105, Glu-108, Asp-112, and Asn-114. His-120 acts as the Proton donor/acceptor in catalysis. Residue Glu-171 participates in Ca(2+) binding. Cys-184 functions as the Acyl-thioester intermediate in the catalytic mechanism.

Belongs to the bacterial sortase family. Class A subfamily. In terms of assembly, monomer and homodimer; in equilibrium.

The protein localises to the cell membrane. It catalyses the reaction The enzyme catalyzes a cell wall sorting reaction in which a surface protein with a sorting signal containing a LPXTG motif is cleaved between the Thr and Gly residue. The resulting threonine carboxyl end of the protein is covalently attached to a pentaglycine cross-bridge of peptidoglycan.. Sortase activity is regulated by monomer-homodimer equilibrium. Mutant cells with monomeric SrtA display more adhesive proteins on the cell surface and are more invasive than wild-type cells, which have majority of SrtA in dimeric form. Dimerization may suppress the enzymatic activity on cell membranes. Stimulated by calcium ions, which promote substrate binding. Calcium ions bind to SrtA and modulate both the structure and dynamics of a large active site loop. Can also be stimulated, to a lesser extent, by Mg(2+) and Mn(2+). Inhibited by sulfhydryl-modifying reagents. In terms of biological role, transpeptidase that anchors surface proteins to the cell wall. Recognizes and modifies its substrate by proteolytic cleavage of a C-terminal sorting signal. Following cleavage, a covalent intermediate is formed via a thioester bond between the sortase and its substrate, which is then transferred and covalently attached to the cell wall. This sortase recognizes a Leu-Pro-x-Thr-Gly (LPXTG) motif, which is cleaved by the sortase between the threonine and glycine residues. Utilizes lipid II as the peptidoglycan substrate for the sorting reaction. Responsible for the display of important virulence factors. Important for interactions with the host and host colonization during infection. This chain is Sortase A, found in Staphylococcus aureus (strain NCTC 8325 / PS 47).